A 401-amino-acid polypeptide reads, in one-letter code: 3-sulfinopropanoyl-CoA desulfinase (401 aa).

Residues 121 to 124, Ser130, and 153 to 156 each bind FAD; these read ICIS and YWIT. Substrate is bound at residue 243–244; sequence YN. FAD-binding positions include Arg272, Gln339, Ser343, 366–370, and Gln387; that span reads GGTAQ.

This sequence belongs to the acyl-CoA dehydrogenase family. Homotetramer. The cofactor is FAD.

It carries out the reaction 3-sulfinopropanoyl-CoA + H2O = propanoyl-CoA + sulfite + H(+). Catalyzes the conversion 3-sulfinopropanoyl-CoA (3SP-CoA) to propanoyl-CoA by abstraction of sulfite. Does not show dehydrogenase activity. Involved in the degradation of 3,3'-dithiodipropionate (DTDP), a sulfur-containing precursor substrate for biosynthesis of polythioesters (PTEs). This chain is 3-sulfinopropanoyl-CoA desulfinase, found in Advenella mimigardefordensis (strain DSM 17166 / LMG 22922 / DPN7).